Reading from the N-terminus, the 192-residue chain is Xanthine phosphoribosyltransferase (192 aa).

Xanthine contacts are provided by leucine 20 and asparagine 27. 128–132 contacts 5-phospho-alpha-D-ribose 1-diphosphate; it reads AHGEA. Lysine 156 is a xanthine binding site.

Belongs to the purine/pyrimidine phosphoribosyltransferase family. Xpt subfamily. In terms of assembly, homodimer.

It localises to the cytoplasm. The catalysed reaction is XMP + diphosphate = xanthine + 5-phospho-alpha-D-ribose 1-diphosphate. It participates in purine metabolism; XMP biosynthesis via salvage pathway; XMP from xanthine: step 1/1. Functionally, converts the preformed base xanthine, a product of nucleic acid breakdown, to xanthosine 5'-monophosphate (XMP), so it can be reused for RNA or DNA synthesis. In Lactobacillus johnsonii (strain CNCM I-12250 / La1 / NCC 533), this protein is Xanthine phosphoribosyltransferase.